The following is a 123-amino-acid chain: Large ribosomal subunit protein uL14 (123 aa).

The protein belongs to the universal ribosomal protein uL14 family. As to quaternary structure, part of the 50S ribosomal subunit. Forms a cluster with proteins L3 and L19. In the 70S ribosome, L14 and L19 interact and together make contacts with the 16S rRNA in bridges B5 and B8.

Functionally, binds to 23S rRNA. Forms part of two intersubunit bridges in the 70S ribosome. The protein is Large ribosomal subunit protein uL14 of Zymomonas mobilis subsp. mobilis (strain ATCC 31821 / ZM4 / CP4).